Consider the following 61-residue polypeptide: Small ribosomal subunit protein uS14 (61 aa).

Residues cysteine 24, cysteine 27, cysteine 40, and cysteine 43 each coordinate Zn(2+).

Belongs to the universal ribosomal protein uS14 family. Zinc-binding uS14 subfamily. In terms of assembly, part of the 30S ribosomal subunit. Contacts proteins S3 and S10. Requires Zn(2+) as cofactor.

Its function is as follows. Binds 16S rRNA, required for the assembly of 30S particles and may also be responsible for determining the conformation of the 16S rRNA at the A site. The sequence is that of Small ribosomal subunit protein uS14 from Clostridium botulinum (strain Alaska E43 / Type E3).